The chain runs to 343 residues: Selenide, water dikinase (343 aa).

Cys15 is an active-site residue. ATP-binding positions include Lys18 and 46 to 48; that span reads HKD. A Mg(2+)-binding site is contributed by Asp49. ATP-binding positions include Asp66, Asp89, and 137 to 139; that span reads GHS. Asp89 contacts Mg(2+). Asp225 is a Mg(2+) binding site.

This sequence belongs to the selenophosphate synthase 1 family. Class I subfamily. Homodimer. It depends on Mg(2+) as a cofactor.

The catalysed reaction is hydrogenselenide + ATP + H2O = selenophosphate + AMP + phosphate + 2 H(+). Synthesizes selenophosphate from selenide and ATP. This is Selenide, water dikinase from Sulfurimonas denitrificans (strain ATCC 33889 / DSM 1251) (Thiomicrospira denitrificans (strain ATCC 33889 / DSM 1251)).